A 365-amino-acid polypeptide reads, in one-letter code: Protein-glutamate methylesterase/protein-glutamine glutaminase (365 aa).

The Response regulatory domain occupies lysine 5–lysine 122. The residue at position 56 (aspartate 56) is a 4-aspartylphosphate. Over residues isoleucine 146–serine 155 the composition is skewed to basic and acidic residues. A disordered region spans residues isoleucine 146–leucine 167. Over residues threonine 156–leucine 167 the composition is skewed to polar residues. A CheB-type methylesterase domain is found at isoleucine 177 to isoleucine 363. Residues serine 182, histidine 208, and aspartate 305 contribute to the active site.

Belongs to the CheB family. Phosphorylated by CheA. Phosphorylation of the N-terminal regulatory domain activates the methylesterase activity.

Its subcellular location is the cytoplasm. It carries out the reaction [protein]-L-glutamate 5-O-methyl ester + H2O = L-glutamyl-[protein] + methanol + H(+). It catalyses the reaction L-glutaminyl-[protein] + H2O = L-glutamyl-[protein] + NH4(+). Functionally, involved in chemotaxis. Part of a chemotaxis signal transduction system that modulates chemotaxis in response to various stimuli. Catalyzes the demethylation of specific methylglutamate residues introduced into the chemoreceptors (methyl-accepting chemotaxis proteins or MCP) by CheR. Also mediates the irreversible deamidation of specific glutamine residues to glutamic acid. The protein is Protein-glutamate methylesterase/protein-glutamine glutaminase of Methanococcus maripaludis (strain DSM 14266 / JCM 13030 / NBRC 101832 / S2 / LL).